The chain runs to 215 residues: Pyridoxine/pyridoxamine 5'-phosphate oxidase (215 aa).

Substrate contacts are provided by residues 9-12 and Lys69; that span reads RRDY. FMN is bound by residues 64 to 69, 79 to 80, Lys86, and Gln108; these read RVLLLK and FT. Substrate is bound by residues Tyr126, Arg130, and Ser134. FMN is bound by residues 143–144 and Trp188; that span reads QS. 194-196 lines the substrate pocket; that stretch reads RLH. Arg198 contributes to the FMN binding site.

Belongs to the pyridoxamine 5'-phosphate oxidase family. Homodimer. FMN is required as a cofactor.

The catalysed reaction is pyridoxamine 5'-phosphate + O2 + H2O = pyridoxal 5'-phosphate + H2O2 + NH4(+). It catalyses the reaction pyridoxine 5'-phosphate + O2 = pyridoxal 5'-phosphate + H2O2. It functions in the pathway cofactor metabolism; pyridoxal 5'-phosphate salvage; pyridoxal 5'-phosphate from pyridoxamine 5'-phosphate: step 1/1. It participates in cofactor metabolism; pyridoxal 5'-phosphate salvage; pyridoxal 5'-phosphate from pyridoxine 5'-phosphate: step 1/1. Its function is as follows. Catalyzes the oxidation of either pyridoxine 5'-phosphate (PNP) or pyridoxamine 5'-phosphate (PMP) into pyridoxal 5'-phosphate (PLP). This Pseudomonas putida (strain GB-1) protein is Pyridoxine/pyridoxamine 5'-phosphate oxidase.